The following is a 545-amino-acid chain: Hydroxylamine reductase (545 aa).

[4Fe-4S] cluster-binding residues include Cys3, Cys6, Cys15, and Cys21. Hybrid [4Fe-2O-2S] cluster is bound by residues His241, Glu265, Cys309, Cys396, Cys424, Cys449, Glu483, and Lys485. Cys396 bears the Cysteine persulfide mark.

The protein belongs to the HCP family. Requires [4Fe-4S] cluster as cofactor. Hybrid [4Fe-2O-2S] cluster is required as a cofactor.

The protein localises to the cytoplasm. The catalysed reaction is A + NH4(+) + H2O = hydroxylamine + AH2 + H(+). Its function is as follows. Catalyzes the reduction of hydroxylamine to form NH(3) and H(2)O. The chain is Hydroxylamine reductase from Zymomonas mobilis subsp. mobilis (strain ATCC 31821 / ZM4 / CP4).